The sequence spans 525 residues: Averantin hydroxylase (525 aa).

Residues 36 to 56 traverse the membrane as a helical segment; sequence VLATFVAGIGALLLWTLTTVF. Residue Asn315 is glycosylated (N-linked (GlcNAc...) asparagine). Cys462 lines the heme pocket.

This sequence belongs to the cytochrome P450 family. Heme serves as cofactor.

It localises to the membrane. The enzyme catalyses (1'S)-averantin + reduced [NADPH--hemoprotein reductase] + O2 = (1'S,5'R)-5'-hydroxyaverantin + oxidized [NADPH--hemoprotein reductase] + H2O. It catalyses the reaction (1'S)-averantin + reduced [NADPH--hemoprotein reductase] + O2 = (1'S,5'S)-5'-hydroxyaverantin + oxidized [NADPH--hemoprotein reductase] + H2O + H(+). The protein operates within mycotoxin biosynthesis. Functionally, averantin hydroxylase; part of the fragmented gene cluster that mediates the biosynthesis of dothistromin (DOTH), a polyketide toxin very similar in structure to the aflatoxin precursor, versicolorin B. The first step of the pathway is the conversion of acetate to norsolorinic acid (NOR) and requires the fatty acid synthase subunits hexA and hexB, as well as the polyketide synthase pksA. PksA combines a hexanoyl starter unit and 7 malonyl-CoA extender units to synthesize the precursor NOR. The hexanoyl starter unit is provided to the acyl-carrier protein (ACP) domain by the fungal fatty acid synthase hexA/hexB. The second step is the conversion of NOR to averantin (AVN) and requires the norsolorinic acid ketoreductase nor1, which catalyzes the dehydration of norsolorinic acid to form (1'S)-averantin. The cytochrome P450 monooxygenase avnA then catalyzes the hydroxylation of AVN to 5'hydroxyaverantin (HAVN). The next step is performed by adhA that transforms HAVN to averufin (AVF). Averufin might then be converted to hydroxyversicolorone by cypX and avfA. Hydroxyversicolorone is further converted versiconal hemiacetal acetate (VHA) by moxY. VHA is then the substrate for the versiconal hemiacetal acetate esterase est1 to yield versiconal (VAL). Versicolorin B synthase vbsA then converts VAL to versicolorin B (VERB) by closing the bisfuran ring. Then, the activity of the versicolorin B desaturase verB leads to versicolorin A (VERA). DotB, a predicted chloroperoxidase, may perform epoxidation of the A-ring of VERA. Alternatively, a cytochrome P450, such as cypX or avnA could catalyze this step. It is also possible that another, uncharacterized, cytochrome P450 enzyme is responsible for this step. Opening of the epoxide could potentially be achieved by the epoxide hydrolase epoA. However, epoA seems not to be required for DOTH biosynthesis, but other epoxide hydrolases may have the ability to complement this hydrolysis. Alternatively, opening of the epoxide ring could be achieved non-enzymatically. The next step is the deoxygenation of ring A to yield the 5,8-dihydroxyanthraquinone which is most likely catalyzed by the NADPH dehydrogenase encoded by ver1. The last stages of DOTH biosynthesis are proposed to involve hydroxylation of the bisfuran. OrdB and norB might have oxidative roles here. An alternative possibility is that cytochrome P450 monoogenases such as avnA and cypX might perform these steps in addition to previously proposed steps. The protein is Averantin hydroxylase of Dothistroma septosporum (strain NZE10 / CBS 128990) (Red band needle blight fungus).